The primary structure comprises 97 residues: Co-chaperonin GroES (97 aa).

This sequence belongs to the GroES chaperonin family. Heptamer of 7 subunits arranged in a ring. Interacts with the chaperonin GroEL.

It is found in the cytoplasm. Together with the chaperonin GroEL, plays an essential role in assisting protein folding. The GroEL-GroES system forms a nano-cage that allows encapsulation of the non-native substrate proteins and provides a physical environment optimized to promote and accelerate protein folding. GroES binds to the apical surface of the GroEL ring, thereby capping the opening of the GroEL channel. The chain is Co-chaperonin GroES from Elusimicrobium minutum (strain Pei191).